Reading from the N-terminus, the 125-residue chain is Large ribosomal subunit protein uL22 (125 aa).

Belongs to the universal ribosomal protein uL22 family. As to quaternary structure, part of the 50S ribosomal subunit.

Its function is as follows. This protein binds specifically to 23S rRNA; its binding is stimulated by other ribosomal proteins, e.g. L4, L17, and L20. It is important during the early stages of 50S assembly. It makes multiple contacts with different domains of the 23S rRNA in the assembled 50S subunit and ribosome. Functionally, the globular domain of the protein is located near the polypeptide exit tunnel on the outside of the subunit, while an extended beta-hairpin is found that lines the wall of the exit tunnel in the center of the 70S ribosome. The chain is Large ribosomal subunit protein uL22 from Erythrobacter litoralis (strain HTCC2594).